Reading from the N-terminus, the 360-residue chain is 3-dehydroquinate synthase (360 aa).

Residues 69–74, 103–107, 127–128, Lys140, Lys149, and 167–170 each bind NAD(+); these read DGEKYK, GVVGD, TT, and TLDT. Zn(2+) is bound by residues Glu182, His246, and His263.

It belongs to the sugar phosphate cyclases superfamily. Dehydroquinate synthase family. Co(2+) serves as cofactor. Requires Zn(2+) as cofactor. It depends on NAD(+) as a cofactor.

The protein localises to the cytoplasm. The enzyme catalyses 7-phospho-2-dehydro-3-deoxy-D-arabino-heptonate = 3-dehydroquinate + phosphate. Its pathway is metabolic intermediate biosynthesis; chorismate biosynthesis; chorismate from D-erythrose 4-phosphate and phosphoenolpyruvate: step 2/7. In terms of biological role, catalyzes the conversion of 3-deoxy-D-arabino-heptulosonate 7-phosphate (DAHP) to dehydroquinate (DHQ). The chain is 3-dehydroquinate synthase from Vesicomyosocius okutanii subsp. Calyptogena okutanii (strain HA).